Here is a 181-residue protein sequence, read N- to C-terminus: Small ribosomal subunit protein uS4 (181 aa).

The S4 RNA-binding domain maps to 108 to 177; sequence RRLQTMVYRQ…EGHPEIERIN (70 aa). A disordered region spans residues 161 to 181; that stretch reads GTSPLTSEGHPEIERINKKRR. A compositionally biased stretch (basic and acidic residues) spans 169-181; sequence GHPEIERINKKRR.

The protein belongs to the universal ribosomal protein uS4 family. As to quaternary structure, part of the 30S ribosomal subunit. Contacts protein S5. The interaction surface between S4 and S5 is involved in control of translational fidelity.

Its function is as follows. One of the primary rRNA binding proteins, it binds directly to 16S rRNA where it nucleates assembly of the body of the 30S subunit. With S5 and S12 plays an important role in translational accuracy. In Methanosphaerula palustris (strain ATCC BAA-1556 / DSM 19958 / E1-9c), this protein is Small ribosomal subunit protein uS4.